The chain runs to 555 residues: Vacuolar fusion protein MON1 homolog A (555 aa).

Positions 1-12 are enriched in basic and acidic residues; it reads MAADMQRKRSSE. Positions 1–87 are disordered; it reads MAADMQRKRS…RGPPPLPADM (87 aa). Residues serine 31 and serine 56 each carry the phosphoserine modification. Position 61 is a phosphothreonine (threonine 61). At serine 91 the chain carries Phosphoserine. The tract at residues 114 to 147 is disordered; the sequence is PGSSEDWLDPPGAVGRPATEPPREGTAEGDEEDA.

This sequence belongs to the MON1/SAND family. As to quaternary structure, interacts with CCZ1. Found in a complex with RMC1, CCZ1, MON1A and MON1B. The MON1A-CCZ1B complex interacts with RIMOC1. The MON1A-CCZ1B complex interacts with RAB7A and this interaction is enhanced in the presence of RIMOC1.

Functionally, plays an important role in membrane trafficking through the secretory apparatus. Not involved in endocytic trafficking to lysosomes. Acts in concert with CCZ1, as a guanine exchange factor (GEF) for RAB7, promotes the exchange of GDP to GTP, converting it from an inactive GDP-bound form into an active GTP-bound form. The protein is Vacuolar fusion protein MON1 homolog A (MON1A) of Macaca fascicularis (Crab-eating macaque).